Here is a 228-residue protein sequence, read N- to C-terminus: Glutamate transport system permease protein GluC (228 aa).

Helical transmembrane passes span 16 to 36 (FWVT…FGTI), 64 to 84 (LTLV…LTLA), 100 to 120 (AVLG…RSGI), 145 to 165 (IIFP…LIAL), and 195 to 215 (LFVV…PMGL). Residues 16–217 (FWVTIKLTIY…ILTLPMGLGL (202 aa)) form the ABC transmembrane type-1 domain.

Belongs to the binding-protein-dependent transport system permease family. HisMQ subfamily. In terms of assembly, the complex is composed of two ATP-binding proteins (GluA), two transmembrane proteins (GluC and GluD) and a solute-binding protein (GluB).

The protein localises to the cell membrane. Part of the ABC transporter complex GluABCD involved in glutamate uptake. Probably responsible for the translocation of the substrate across the membrane. The chain is Glutamate transport system permease protein GluC from Corynebacterium glutamicum (strain ATCC 13032 / DSM 20300 / JCM 1318 / BCRC 11384 / CCUG 27702 / LMG 3730 / NBRC 12168 / NCIMB 10025 / NRRL B-2784 / 534).